A 268-amino-acid chain; its full sequence is Ribosomal RNA small subunit methyltransferase A (268 aa).

Residues asparagine 12, leucine 14, glycine 38, glutamate 59, aspartate 82, and asparagine 107 each coordinate S-adenosyl-L-methionine.

It belongs to the class I-like SAM-binding methyltransferase superfamily. rRNA adenine N(6)-methyltransferase family. RsmA subfamily.

The protein localises to the cytoplasm. The enzyme catalyses adenosine(1518)/adenosine(1519) in 16S rRNA + 4 S-adenosyl-L-methionine = N(6)-dimethyladenosine(1518)/N(6)-dimethyladenosine(1519) in 16S rRNA + 4 S-adenosyl-L-homocysteine + 4 H(+). Its function is as follows. Specifically dimethylates two adjacent adenosines (A1518 and A1519) in the loop of a conserved hairpin near the 3'-end of 16S rRNA in the 30S particle. May play a critical role in biogenesis of 30S subunits. The polypeptide is Ribosomal RNA small subunit methyltransferase A (Onion yellows phytoplasma (strain OY-M)).